Here is a 463-residue protein sequence, read N- to C-terminus: GTPase Der (463 aa).

2 consecutive EngA-type G domains span residues 3 to 166 (PVVA…PESG) and 177 to 350 (IRIA…QSAM). GTP is bound by residues 9-16 (GRTNVGKS), 56-60 (DTGGI), 118-121 (NKID), 183-190 (GRPNVGKS), 230-234 (DTAGI), and 295-298 (NKWD). One can recognise a KH-like domain in the interval 351-435 (LDLSASRLTQ…PLKLVFKSAE (85 aa)).

It belongs to the TRAFAC class TrmE-Era-EngA-EngB-Septin-like GTPase superfamily. EngA (Der) GTPase family. In terms of assembly, associates with the 50S ribosomal subunit.

Its function is as follows. GTPase that plays an essential role in the late steps of ribosome biogenesis. The protein is GTPase Der of Methylococcus capsulatus (strain ATCC 33009 / NCIMB 11132 / Bath).